Consider the following 594-residue polypeptide: ATPase family AAA domain-containing protein 3 (594 aa).

The disordered stretch occupies residues 1–50 (MSWLFGLNKGQQGPPSVPGFPEPPSPPGGSGDGGDKNKPKDKWSNFDPTG). At 1 to 242 (MSWLFGLNKG…FRAFISDWDK (242 aa)) the chain is on the mitochondrial intermembrane side. Residues 15–27 (PSVPGFPEPPSPP) show a composition bias toward pro residues. Over residues 33 to 44 (GGDKNKPKDKWS) the composition is skewed to basic and acidic residues. Positions 51-213 (LERAAKAARE…RENIRLKAAE (163 aa)) form a coiled coil. Residues 243–260 (VTATVAGLSLLAVGIYTA) traverse the membrane as a helical segment. At 261–594 (KNATGVAGRY…LQPLLEGTPV (334 aa)) the chain is on the mitochondrial matrix side. 348–355 (GPPGTGKT) provides a ligand contact to ATP. Residues 571-581 (EGKENAAKESG) show a composition bias toward basic and acidic residues. A disordered region spans residues 571–594 (EGKENAAKESGKNPLQPLLEGTPV).

It belongs to the AAA ATPase family.

The protein resides in the mitochondrion inner membrane. Its subcellular location is the mitochondrion matrix. It is found in the mitochondrion nucleoid. Functionally, essential for mitochondrial network organization, mitochondrial metabolism and cell growth at organism and cellular level. May play an important role in mitochondrial protein synthesis. May also participate in mitochondrial DNA replication. May bind to mitochondrial DNA D-loops and contribute to nucleoid stability. Required for enhanced channeling of cholesterol for hormone-dependent steroidogenesis. The chain is ATPase family AAA domain-containing protein 3 (atad3) from Xenopus tropicalis (Western clawed frog).